The primary structure comprises 204 residues: Somatotropin (204 aa).

The signal sequence occupies residues 1–17; the sequence is MDRVVLMLSVMSLGVSS. The residue at position 18 (Q18) is a Pyrrolidone carboxylic acid. H36 is a Zn(2+) binding site. A disulfide bridge connects residues C69 and C177. Position 186 (E186) interacts with Zn(2+). A disulfide bridge links C194 with C202.

It belongs to the somatotropin/prolactin family.

It localises to the secreted. In terms of biological role, growth hormone plays an important role in growth control and is involved in the regulation of several anabolic processes. Implicated as an osmoregulatory substance important for seawater adaptation. This chain is Somatotropin (gh), found in Sparus aurata (Gilthead sea bream).